The sequence spans 144 residues: Prefoldin subunit alpha (144 aa).

It belongs to the prefoldin alpha subunit family. Heterohexamer of two alpha and four beta subunits.

It is found in the cytoplasm. Molecular chaperone capable of stabilizing a range of proteins. Seems to fulfill an ATP-independent, HSP70-like function in archaeal de novo protein folding. This is Prefoldin subunit alpha from Methanococcus maripaludis (strain C5 / ATCC BAA-1333).